A 465-amino-acid polypeptide reads, in one-letter code: UDP-N-acetylmuramate--L-alanine ligase (465 aa).

115 to 121 (GAHGKTT) serves as a coordination point for ATP.

It belongs to the MurCDEF family.

The protein resides in the cytoplasm. It carries out the reaction UDP-N-acetyl-alpha-D-muramate + L-alanine + ATP = UDP-N-acetyl-alpha-D-muramoyl-L-alanine + ADP + phosphate + H(+). It functions in the pathway cell wall biogenesis; peptidoglycan biosynthesis. Functionally, cell wall formation. The sequence is that of UDP-N-acetylmuramate--L-alanine ligase from Coxiella burnetii (strain CbuK_Q154) (Coxiella burnetii (strain Q154)).